Consider the following 98-residue polypeptide: NADH-ubiquinone oxidoreductase chain 4L (98 aa).

A run of 3 helical transmembrane segments spans residues 1 to 21 (MTTM…GVYI), 29 to 49 (TLLC…LTLL), and 59 to 79 (FPLI…ALLV).

It belongs to the complex I subunit 4L family. Core subunit of respiratory chain NADH dehydrogenase (Complex I) which is composed of 45 different subunits.

The protein localises to the mitochondrion inner membrane. It carries out the reaction a ubiquinone + NADH + 5 H(+)(in) = a ubiquinol + NAD(+) + 4 H(+)(out). Functionally, core subunit of the mitochondrial membrane respiratory chain NADH dehydrogenase (Complex I) which catalyzes electron transfer from NADH through the respiratory chain, using ubiquinone as an electron acceptor. Part of the enzyme membrane arm which is embedded in the lipid bilayer and involved in proton translocation. The protein is NADH-ubiquinone oxidoreductase chain 4L (MT-ND4L) of Zaglossus bruijni (Western long-beaked echidna).